Here is a 175-residue protein sequence, read N- to C-terminus: Ribosome maturation factor RimM (175 aa).

Residues 96-175 (EEDYYWHDLI…TITVDWDAGF (80 aa)) form the PRC barrel domain.

Belongs to the RimM family. In terms of assembly, binds ribosomal protein uS19.

It localises to the cytoplasm. In terms of biological role, an accessory protein needed during the final step in the assembly of 30S ribosomal subunit, possibly for assembly of the head region. Essential for efficient processing of 16S rRNA. May be needed both before and after RbfA during the maturation of 16S rRNA. It has affinity for free ribosomal 30S subunits but not for 70S ribosomes. This chain is Ribosome maturation factor RimM, found in Haemophilus ducreyi (strain 35000HP / ATCC 700724).